Consider the following 241-residue polypeptide: Adenosylcobinamide-GDP ribazoletransferase (241 aa).

Transmembrane regions (helical) follow at residues 34–54 (RIPAYFTIVGYIPGLIYFTGS), 55–75 (FLSLNFGIIAPLLSIVLGFYL), 109–129 (VGPFAVFYGVLYVIVFWELIT), 133–153 (PVAFVFGSVFGRYTMDVVLVF), 165–185 (MLFPFNRFLLVPATLFTLPLL), 186–206 (LIDVKLFLVSIFSSWLVGFLI), and 221–241 (VLGGSCLIGQIVVLLILNYLI).

The protein belongs to the CobS family. It depends on Mg(2+) as a cofactor.

It is found in the cell inner membrane. The enzyme catalyses alpha-ribazole + adenosylcob(III)inamide-GDP = adenosylcob(III)alamin + GMP + H(+). The catalysed reaction is alpha-ribazole 5'-phosphate + adenosylcob(III)inamide-GDP = adenosylcob(III)alamin 5'-phosphate + GMP + H(+). Its pathway is cofactor biosynthesis; adenosylcobalamin biosynthesis; adenosylcobalamin from cob(II)yrinate a,c-diamide: step 7/7. Functionally, joins adenosylcobinamide-GDP and alpha-ribazole to generate adenosylcobalamin (Ado-cobalamin). Also synthesizes adenosylcobalamin 5'-phosphate from adenosylcobinamide-GDP and alpha-ribazole 5'-phosphate. This Fervidobacterium nodosum (strain ATCC 35602 / DSM 5306 / Rt17-B1) protein is Adenosylcobinamide-GDP ribazoletransferase.